The sequence spans 328 residues: MSLQNLTRFPRLELIGAPTPLEYLPRLSDHLGREIFIKRDDTTPLAMGGNKLRKLEFLAADALREGADTLITAGAIQSNHVRQTAAVAAKLGLHCVALLENPIGTRAENYLSNGNRLLLDLFNTQVEMCDALTDPAAQLDELATRIEAQGYRPYVIPVGGSNALGALGYVESALEISQQCEDAVAISSVVVASGSAGTHAGLAVGLEQLMPQAELIGVTVSRSVADQLPKVVALQQAVANSLELQAKAEIILWDDYFAPGYGTPNEDGMAAVKLLAQLEGILLDPVYTGKAMAGLIDGITQKRFKDEGPILFVHTGGAPALFAYHPHL.

Position 51 is an N6-(pyridoxal phosphate)lysine (K51).

The protein belongs to the ACC deaminase/D-cysteine desulfhydrase family. As to quaternary structure, homodimer. Requires pyridoxal 5'-phosphate as cofactor.

It carries out the reaction D-cysteine + H2O = hydrogen sulfide + pyruvate + NH4(+) + H(+). In terms of biological role, catalyzes the alpha,beta-elimination reaction of D-cysteine and of several D-cysteine derivatives. It could be a defense mechanism against D-cysteine. The sequence is that of D-cysteine desulfhydrase from Klebsiella pneumoniae subsp. pneumoniae (strain ATCC 700721 / MGH 78578).